Consider the following 212-residue polypeptide: Peptide methionine sulfoxide reductase MsrA (212 aa).

Residue Cys52 is part of the active site.

It belongs to the MsrA Met sulfoxide reductase family.

It catalyses the reaction L-methionyl-[protein] + [thioredoxin]-disulfide + H2O = L-methionyl-(S)-S-oxide-[protein] + [thioredoxin]-dithiol. The catalysed reaction is [thioredoxin]-disulfide + L-methionine + H2O = L-methionine (S)-S-oxide + [thioredoxin]-dithiol. Functionally, has an important function as a repair enzyme for proteins that have been inactivated by oxidation. Catalyzes the reversible oxidation-reduction of methionine sulfoxide in proteins to methionine. This Escherichia coli O127:H6 (strain E2348/69 / EPEC) protein is Peptide methionine sulfoxide reductase MsrA.